The sequence spans 174 residues: Trypsin inhibitor BvTI (174 aa).

2 cysteine pairs are disulfide-bonded: Cys-41–Cys-84 and Cys-131–Cys-138.

It belongs to the protease inhibitor I3 (leguminous Kunitz-type inhibitor) family.

The protein resides in the secreted. In terms of biological role, inhibits bovine trypsin and chymotrypsin, and human plasmin, plasma kallikrein and factor XIIa. The polypeptide is Trypsin inhibitor BvTI (Bauhinia variegata (Purple orchid tree)).